A 606-amino-acid chain; its full sequence is Ubiquitin-like modifier-activating enzyme ATG7 (606 aa).

The short motif at 316–321 (GSGTLG) is the GXGXXG motif element. Catalysis depends on Cys-488, which acts as the Glycyl thioester intermediate. The tract at residues 567–606 (ALDDYKCVEKLSGLSKVQEEAELALEEDFDFSEDDEFVTG) is homodimerization.

This sequence belongs to the ATG7 family. Homodimer. Interacts with ATG8 through a thioester bond between Cys-488 and the C-terminal Gly of ATG8 and with ATG12 through a thioester bond between Cys-488 and the C-terminal Gly of ATG12. Also interacts with ATG3.

It is found in the cytoplasm. Its subcellular location is the preautophagosomal structure. Its function is as follows. E1-like activating enzyme involved in the 2 ubiquitin-like systems required for cytoplasm to vacuole transport (Cvt) and autophagy. Activates ATG12 for its conjugation with ATG5 and ATG8 for its conjugation with phosphatidylethanolamine. Both systems are needed for the ATG8 association to Cvt vesicles and autophagosomes membranes. Autophagy is essential for maintenance of amino acid levels and protein synthesis under nitrogen starvation. Required for selective autophagic degradation of the nucleus (nucleophagy) as well as for mitophagy which contributes to regulate mitochondrial quantity and quality by eliminating the mitochondria to a basal level to fulfill cellular energy requirements and preventing excess ROS production. The polypeptide is Ubiquitin-like modifier-activating enzyme ATG7 (Kluyveromyces marxianus (strain DMKU3-1042 / BCC 29191 / NBRC 104275) (Yeast)).